The primary structure comprises 178 residues: Caveolin-1 (178 aa).

Residue Ser-2 is modified to N-acetylserine. Ser-2 is modified (phosphoserine). The segment at 2–94 (SGGKYVDSEG…WKASFTTFTV (93 aa)) is required for homooligomerization. Over 2-104 (SGGKYVDSEG…TKYWFYRLLS (103 aa)) the chain is Cytoplasmic. At Lys-5 the chain carries N6-acetyllysine; alternate. Lys-5 is covalently cross-linked (Glycyl lysine isopeptide (Lys-Gly) (interchain with G-Cter in ubiquitin); alternate). A Phosphotyrosine modification is found at Tyr-6. Phosphoserine is present on Ser-9. Tyr-14 is subject to Phosphotyrosine; by ABL1. Tyr-25 bears the Phosphotyrosine mark. Residues Lys-26 and Lys-30 each participate in a glycyl lysine isopeptide (Lys-Gly) (interchain with G-Cter in ubiquitin) cross-link. Ser-37 is subject to Phosphoserine. Residues Lys-39, Lys-47, and Lys-57 each participate in a glycyl lysine isopeptide (Lys-Gly) (interchain with G-Cter in ubiquitin) cross-link. The segment at 82–94 (DGIWKASFTTFTV) is interaction with CAVIN3. Residues 105–125 (ALFGIPMALIWGIYFAILSFL) constitute an intramembrane region (helical). Residues 126-178 (HIWAVVPCIKSFLIEIQCISRVYSIYIHTVCDPLFEAIGKIFSNVRISLQKEI) lie on the Cytoplasmic side of the membrane. The interacts with SPRY1, SPRY2, SPRY3 and SPRY4 stretch occupies residues 131-142 (VPCIKSFLIEIQ). S-palmitoyl cysteine attachment occurs at residues Cys-133, Cys-143, and Cys-156. An interacts with SPRY1, SPRY2, and SPRY4 region spans residues 149-160 (SIYIHTVCDPLF). Positions 167 to 178 (FSNVRISLQKEI) are interacts with SPRY1, SPRY2, SPRY3 and SPRY4.

It belongs to the caveolin family. As to quaternary structure, homooligomer. Interacts with GLIPR2. Interacts with NOSTRIN. Interacts with SNAP25 and STX1A. Interacts (via the N-terminus) with DPP4; the interaction is direct. Interacts with CTNNB1, CDH1 and JUP. Interacts with PACSIN2; this interaction induces membrane tubulation. Interacts with SLC7A9. Interacts with BMX and BTK. Interacts with TGFBR1. Interacts with CAVIN3 (via leucine-zipper domain) in a cholesterol-sensitive manner. Interacts with CAVIN1. Interacts with EHD2 in a cholesterol-dependent manner. Forms a ternary complex with UBXN6 and VCP; mediates CAV1 targeting to lysosomes for degradation. Interacts with ABCG1; this interaction regulates ABCG1-mediated cholesterol efflux. Interacts with NEU3; this interaction enhances NEU3 sialidase activity within caveola. Interacts (via C-terminus) with SPRY1, SPRY2 (via C-terminus), SPRY3, and SPRY4. Interacts with IGFBP5; this interaction allows trafficking of IGFBP5 from the plasma membrane to the nucleus. Post-translationally, phosphorylated at Tyr-14 by ABL1 in response to oxidative stress. Ubiquitinated. Undergo monoubiquitination and multi- and/or polyubiquitination. Monoubiquitination of N-terminal lysines promotes integration in a ternary complex with UBXN6 and VCP which promotes oligomeric CAV1 targeting to lysosomes for degradation. Ubiquitinated by ZNRF1; leading to degradation and modulation of the TLR4-mediated immune response.

It is found in the golgi apparatus membrane. It localises to the cell membrane. The protein localises to the membrane. Its subcellular location is the caveola. The protein resides in the membrane raft. In terms of biological role, may act as a scaffolding protein within caveolar membranes. Forms a stable heterooligomeric complex with CAV2 that targets to lipid rafts and drives caveolae formation. Mediates the recruitment of CAVIN proteins (CAVIN1/2/3/4) to the caveolae. Interacts directly with G-protein alpha subunits and can functionally regulate their activity. Involved in the costimulatory signal essential for T-cell receptor (TCR)-mediated T-cell activation. Its binding to DPP4 induces T-cell proliferation and NF-kappa-B activation in a T-cell receptor/CD3-dependent manner. Recruits CTNNB1 to caveolar membranes and may regulate CTNNB1-mediated signaling through the Wnt pathway. Negatively regulates TGFB1-mediated activation of SMAD2/3 by mediating the internalization of TGFBR1 from membrane rafts leading to its subsequent degradation. Binds 20(S)-hydroxycholesterol (20(S)-OHC). The protein is Caveolin-1 (CAV1) of Aotus nancymaae (Ma's night monkey).